The primary structure comprises 154 residues: Probable transcription factor At4g00232 (154 aa).

The segment at 1–44 is disordered; it reads MDKANTNRSKVCGGSGEAKLTGKKRKNVSAKQSKKDAKKENSQM.

Belongs to the GeBP family.

The polypeptide is Probable transcription factor At4g00232 (Arabidopsis thaliana (Mouse-ear cress)).